A 1625-amino-acid polypeptide reads, in one-letter code: Probable cation-transporting ATPase I (1625 aa).

8 consecutive transmembrane segments (helical) span residues 148-168, 177-197, 358-378, 637-657, 673-693, 778-798, 968-988, and 997-1017; these read VVSA…PNSA, LAIL…GATV, LIAA…AGAI, ASES…LLLV, WLNP…WSAA, ILAV…ALLV, LTSK…ALAL, and AVAD…PLVA. Asp-1053 acts as the 4-aspartylphosphate intermediate in catalysis. Mg(2+) is bound by residues Asp-1340 and Asp-1344. 3 helical membrane-spanning segments follow: residues 1401–1421, 1432–1452, and 1547–1567; these read ILVG…AFGA, LLVN…TSQF, and VIAT…TPVI.

It belongs to the cation transport ATPase (P-type) (TC 3.A.3) family.

Its subcellular location is the cell membrane. The enzyme catalyses ATP + H2O = ADP + phosphate + H(+). The protein is Probable cation-transporting ATPase I (ctpI) of Mycobacterium tuberculosis (strain CDC 1551 / Oshkosh).